The following is a 435-amino-acid chain: Shikimate O-hydroxycinnamoyltransferase (435 aa).

Catalysis depends on proton acceptor residues His-153 and Asp-382.

The protein belongs to the plant acyltransferase family. As to expression, highly expressed in stem vascular tissues.

The catalysed reaction is shikimate + 4-coumaroyl-CoA = trans-4-coumaroylshikimate + CoA. Acyltransferase involved in the biosynthesis of lignin. The affinity for shikimate as acceptor is 100-fold higher than for quinate. The most efficient donors are caffeoyl-CoA &gt; p-coumaroyl-CoA &gt; feruloyl-CoA &gt;&gt; sinapoyl-CoA. The polypeptide is Shikimate O-hydroxycinnamoyltransferase (HST) (Nicotiana tabacum (Common tobacco)).